A 139-amino-acid polypeptide reads, in one-letter code: Lymphocyte antigen 6H (139 aa).

Positions 1–25 (MLPAAMKSLGLALLALLLCPSPAHG) are cleaved as a signal peptide. Positions 26-113 (LWCQDCTLAN…CEKDLCNGAS (88 aa)) constitute a UPAR/Ly6 domain. Cystine bridges form between cysteine 28–cysteine 51, cysteine 31–cysteine 39, cysteine 44–cysteine 72, cysteine 76–cysteine 103, and cysteine 104–cysteine 109. The N-linked (GlcNAc...) asparagine glycan is linked to asparagine 35. The GPI-anchor amidated asparagine moiety is linked to residue asparagine 110. The propeptide at 111-139 (GASVAGRSPWALAGGLLLSLGPALLWAGP) is removed in mature form.

In terms of assembly, interacts with CHRNA4 and CHRNA7. Strongly expressed in brain, also found in lower levels in eye and reproductive tissues.

Its subcellular location is the cell membrane. Its function is as follows. Believed to act as modulator of nicotinic acetylcholine receptors (nAChRs) activity. In vitro inhibits alpha-3:beta-4-containing nAChRs maximum response. In vitro inhibits alpha-3:beta-4-containing nAChRs maximum response. May play a role in the intracellular trafficking of alpha-7-containing nAChRs and may inhibit their expression at the cell surface. Seems to inhibit alpha-7/CHRNA7 signaling in hippocampal neurons. The protein is Lymphocyte antigen 6H (Ly6h) of Mus musculus (Mouse).